Reading from the N-terminus, the 461-residue chain is MECLMAVILAAGEGKRMKSKKAKVVHEIQGIPLVEWVYRSVKNAGIDEVVLVVGHKAEEVKEKMGDKVLYAFQEKQLGTGHALMQAQEYLKDKDGYVVVLYGDTPLITSKTISDTINYHREQANSATIITAVLNNPDGYGRIVRSGDGSVRKIVEHKDASLEERNIKEINSGIYCFNIRDLTEALKELDNNNSQGEYYLTDTIEILINKGKKVGAIKVEDSSEILGINDRVQLAEAGRIIRSRILKRHMKNGVTIIDPDSTYIDEDVEIGIDTVVYPSTIIEGKTKIGEDCIIGPGSRLVNAQISDRVEVKNSVVLESSIDNDTKVGPFAYVRPGSVIGKNVKIGDFVEIKKSVIGDKTKISHLTYVGDAEVGKNVNLGCGVVVVNYDGKKKNKTIIGDNAFVGCNVNLISPVEVKDNAYVAAGSTITEEVPEYSLAIARSRQTIKEDWVIKKGMLRQEKE.

The pyrophosphorylase stretch occupies residues 1 to 230; the sequence is MECLMAVILA…SSEILGINDR (230 aa). UDP-N-acetyl-alpha-D-glucosamine contacts are provided by residues 9–12, Lys23, Gln73, 78–79, 101–103, Gly140, Glu155, Asn170, and Asn228; these read LAAG, GT, and YGD. Asp103 provides a ligand contact to Mg(2+). Residue Asn228 participates in Mg(2+) binding. A linker region spans residues 231-251; sequence VQLAEAGRIIRSRILKRHMKN. The tract at residues 252-461 is N-acetyltransferase; sequence GVTIIDPDST…KKGMLRQEKE (210 aa). Residues Arg333 and Lys351 each coordinate UDP-N-acetyl-alpha-D-glucosamine. Catalysis depends on His363, which acts as the Proton acceptor. Residues Tyr366 and Asn377 each coordinate UDP-N-acetyl-alpha-D-glucosamine. Residues 386–387, Ala423, and Arg440 contribute to the acetyl-CoA site; that span reads NY.

It in the N-terminal section; belongs to the N-acetylglucosamine-1-phosphate uridyltransferase family. This sequence in the C-terminal section; belongs to the transferase hexapeptide repeat family. As to quaternary structure, homotrimer. Mg(2+) serves as cofactor.

The protein localises to the cytoplasm. It carries out the reaction alpha-D-glucosamine 1-phosphate + acetyl-CoA = N-acetyl-alpha-D-glucosamine 1-phosphate + CoA + H(+). The enzyme catalyses N-acetyl-alpha-D-glucosamine 1-phosphate + UTP + H(+) = UDP-N-acetyl-alpha-D-glucosamine + diphosphate. It functions in the pathway nucleotide-sugar biosynthesis; UDP-N-acetyl-alpha-D-glucosamine biosynthesis; N-acetyl-alpha-D-glucosamine 1-phosphate from alpha-D-glucosamine 6-phosphate (route II): step 2/2. Its pathway is nucleotide-sugar biosynthesis; UDP-N-acetyl-alpha-D-glucosamine biosynthesis; UDP-N-acetyl-alpha-D-glucosamine from N-acetyl-alpha-D-glucosamine 1-phosphate: step 1/1. The protein operates within bacterial outer membrane biogenesis; LPS lipid A biosynthesis. Its function is as follows. Catalyzes the last two sequential reactions in the de novo biosynthetic pathway for UDP-N-acetylglucosamine (UDP-GlcNAc). The C-terminal domain catalyzes the transfer of acetyl group from acetyl coenzyme A to glucosamine-1-phosphate (GlcN-1-P) to produce N-acetylglucosamine-1-phosphate (GlcNAc-1-P), which is converted into UDP-GlcNAc by the transfer of uridine 5-monophosphate (from uridine 5-triphosphate), a reaction catalyzed by the N-terminal domain. The protein is Bifunctional protein GlmU of Acetivibrio thermocellus (strain ATCC 27405 / DSM 1237 / JCM 9322 / NBRC 103400 / NCIMB 10682 / NRRL B-4536 / VPI 7372) (Clostridium thermocellum).